A 160-amino-acid chain; its full sequence is Oocyte-secreted protein 4B (160 aa).

Positions 1-13 are cleaved as a signal peptide; it reads MKTSVLLAITAMC.

It belongs to the PLAC1 family.

It localises to the secreted. This is Oocyte-secreted protein 4B from Homo sapiens (Human).